A 478-amino-acid polypeptide reads, in one-letter code: G2/mitotic-specific cyclin-B (478 aa).

A disordered region spans residues 1–153; it reads MNENDENGPS…KTIQQEEPPR (153 aa). Low complexity predominate over residues 16 to 31; sequence AKAAALTTDAPAANGA. The span at 65 to 74 shows a compositional bias: basic and acidic residues; the sequence is DNGETKDAKK. Over residues 77–102 the composition is skewed to polar residues; sequence SKTGLTSKATMQSGGVQKLSRSNLSR. A compositionally biased stretch (basic and acidic residues) spans 110–121; it reads NNVKKPATEAKR. Residues 133-145 are compositionally biased toward polar residues; it reads KRTSSQKSLQEKT.

It belongs to the cyclin family. Cyclin AB subfamily.

In terms of biological role, essential for the control of the cell cycle at the G2/M (mitosis) transition. Interacts with the CDC2 protein kinase to form MPF. G2/M cyclins accumulate steadily during G2 and are abruptly destroyed at mitosis. The chain is G2/mitotic-specific cyclin-B (nimE) from Emericella nidulans (strain FGSC A4 / ATCC 38163 / CBS 112.46 / NRRL 194 / M139) (Aspergillus nidulans).